The chain runs to 351 residues: UPF0252 protein MJECL39 (351 aa).

The next 2 helical transmembrane spans lie at 58-78 (FITF…VWLW) and 91-111 (IIIC…LCGV).

It belongs to the UPF0252 family.

Its subcellular location is the cell membrane. The protein is UPF0252 protein MJECL39 of Methanocaldococcus jannaschii (strain ATCC 43067 / DSM 2661 / JAL-1 / JCM 10045 / NBRC 100440) (Methanococcus jannaschii).